The following is a 388-amino-acid chain: Na(+)/H(+) antiporter NhaA (388 aa).

Transmembrane regions (helical) follow at residues 8–28 (FFSAASGGAIILLLSALLGLL), 57–77 (LAEFISIAPMSLFFFVVIAEI), 93–113 (ILPLISALGGMMIPACLYGLI), 123–143 (GWAIPIATDAAFTLPIILALG), 152–172 (VWLMALAIFDDLLGIVVIALF), 175–195 (SHLNGYALFAAGLITAVMIGL), 210–230 (GVVLWWALLVSGLHPTIAGVI), 254–274 (IIAPWVTWLILPLFGFVSMGM), 278–298 (AMSFHVLLAPVPLGVALGLFL), 328–348 (LFGLSLLCGIGFTISLFIAEL), and 361–381 (YGILMGSLLSALAGWLWLRFL).

This sequence belongs to the NhaA Na(+)/H(+) (TC 2.A.33) antiporter family.

It localises to the cell inner membrane. It carries out the reaction Na(+)(in) + 2 H(+)(out) = Na(+)(out) + 2 H(+)(in). Na(+)/H(+) antiporter that extrudes sodium in exchange for external protons. The chain is Na(+)/H(+) antiporter NhaA from Zymomonas mobilis subsp. mobilis (strain ATCC 31821 / ZM4 / CP4).